The chain runs to 470 residues: ATP synthase subunit beta (470 aa).

157–164 is an ATP binding site; the sequence is GGAGVGKT.

This sequence belongs to the ATPase alpha/beta chains family. In terms of assembly, F-type ATPases have 2 components, CF(1) - the catalytic core - and CF(0) - the membrane proton channel. CF(1) has five subunits: alpha(3), beta(3), gamma(1), delta(1), epsilon(1). CF(0) has three main subunits: a(1), b(2) and c(9-12). The alpha and beta chains form an alternating ring which encloses part of the gamma chain. CF(1) is attached to CF(0) by a central stalk formed by the gamma and epsilon chains, while a peripheral stalk is formed by the delta and b chains.

The protein localises to the cell membrane. It catalyses the reaction ATP + H2O + 4 H(+)(in) = ADP + phosphate + 5 H(+)(out). In terms of biological role, produces ATP from ADP in the presence of a proton gradient across the membrane. The catalytic sites are hosted primarily by the beta subunits. The chain is ATP synthase subunit beta from Pelotomaculum thermopropionicum (strain DSM 13744 / JCM 10971 / SI).